We begin with the raw amino-acid sequence, 226 residues long: Glutathione peroxidase 3 (226 aa).

An N-terminal signal peptide occupies residues methionine 1–glycine 24. Selenocysteine 73 is an active-site residue. A non-standard amino acid (selenocysteine) is located at residue selenocysteine 73.

It belongs to the glutathione peroxidase family. As to quaternary structure, homotetramer. As to expression, secreted in plasma.

It localises to the secreted. It carries out the reaction 2 glutathione + H2O2 = glutathione disulfide + 2 H2O. It catalyses the reaction tert-butyl hydroperoxide + 2 glutathione = tert-butanol + glutathione disulfide + H2O. In terms of biological role, protects cells and enzymes from oxidative damage, by catalyzing the reduction of hydrogen peroxide, lipid peroxides and organic hydroperoxide, by glutathione. The chain is Glutathione peroxidase 3 from Mus musculus (Mouse).